Consider the following 148-residue polypeptide: MKIAVKKSCRNLSELPQELLYKILGLLPTRNVVSTSLISHQRRSQFHWMERLKFRYPRLLLDNRVPDAENEAENLVPGPSRCYHEDPKSCIIQEQIFLPYTSGSFHVQTRISSQRLIHNQHRKCQLRCVVQLSSFCLLSLQQIRLQRC.

The 51-residue stretch at 9 to 59 folds into the F-box domain; it reads CRNLSELPQELLYKILGLLPTRNVVSTSLISHQRRSQFHWMERLKFRYPRL.

The protein is F-box protein At3g55900 of Arabidopsis thaliana (Mouse-ear cress).